Here is a 1016-residue protein sequence, read N- to C-terminus: UvrABC system protein A (1016 aa).

32–39 lines the ATP pocket; it reads GVSGSGKS. The C4-type zinc finger occupies 259 to 286; it reads CPEHGSVLEELEPRSFSFNSPYGACGDC. ABC transporter domains follow at residues 315–627 and 647–975; these read WTKK…KNSL and GNGK…EYLR. 679 to 686 lines the ATP pocket; the sequence is GPSGSGKS. A C4-type zinc finger spans residues 778–804; the sequence is CEHCKGDGVMKIEMNFLPDIYVPCEVC. The interval 984–1016 is disordered; the sequence is EPRARGEKAEKPAKAKAPAKKRTKKQTELVEAD. Residues 985 to 996 are compositionally biased toward basic and acidic residues; it reads PRARGEKAEKPA.

It belongs to the ABC transporter superfamily. UvrA family. In terms of assembly, forms a heterotetramer with UvrB during the search for lesions.

Its subcellular location is the cytoplasm. In terms of biological role, the UvrABC repair system catalyzes the recognition and processing of DNA lesions. UvrA is an ATPase and a DNA-binding protein. A damage recognition complex composed of 2 UvrA and 2 UvrB subunits scans DNA for abnormalities. When the presence of a lesion has been verified by UvrB, the UvrA molecules dissociate. This chain is UvrABC system protein A, found in Deinococcus radiodurans (strain ATCC 13939 / DSM 20539 / JCM 16871 / CCUG 27074 / LMG 4051 / NBRC 15346 / NCIMB 9279 / VKM B-1422 / R1).